Reading from the N-terminus, the 357-residue chain is Cyclin-Y (357 aa).

Polar residues predominate over residues 1 to 13 (MGNSSCCLRTRSS). The interval 1–23 (MGNSSCCLRTRSSSGEDKSYNND) is disordered. The 99-residue stretch at 186–284 (PDHRNIYRFV…RFLECLDFNI (99 aa)) folds into the Cyclin N-terminal domain.

The protein belongs to the cyclin family. As to quaternary structure, interacts with pct-1; the interaction is required to activate pct-1.

Its subcellular location is the cytoplasm. It localises to the cell projection. The protein localises to the dendrite. It is found in the axon. Functionally, in association with pct-1, regulates the trafficking of synaptic vesicle precursors in DA motor neurons by promoting anterograde trafficking to the axon and preventing dynein-dependent trafficking to the dendrite. May also regulate synaptic vesicle trafficking in DD motor neurons and in RIA interneurons. Involved in synapse formation during DD motor neuron remodeling by disassembling ventral presynaptic structures. May activate cdk-5. This chain is Cyclin-Y, found in Caenorhabditis elegans.